A 274-amino-acid polypeptide reads, in one-letter code: uncharacterized protein (274 aa).

An N-terminal signal peptide occupies residues methionine 1–alanine 17. Cysteine 18 is lipidated: N-palmitoyl cysteine. Cysteine 18 carries the S-diacylglycerol cysteine lipid modification. Positions cysteine 18–asparagine 169 are disordered. Residues aspartate 25 to aspartate 76 show a composition bias toward basic and acidic residues. Over residues serine 91–asparagine 169 the composition is skewed to low complexity.

It is found in the cell membrane. This is an uncharacterized protein from Staphylococcus saprophyticus subsp. saprophyticus (strain ATCC 15305 / DSM 20229 / NCIMB 8711 / NCTC 7292 / S-41).